Reading from the N-terminus, the 269-residue chain is Expansin-B9 (269 aa).

An N-terminal signal peptide occupies residues Met-1–Cys-24. N-linked (GlcNAc...) asparagine glycosylation is present at Asn-34. The Expansin-like EG45 domain occupies Gly-63–Gly-169. Cystine bridges form between Cys-66-Cys-94, Cys-97-Cys-164, and Cys-102-Cys-108. The region spanning Asn-183–Ser-264 is the Expansin-like CBD domain.

It belongs to the expansin family. Expansin B subfamily. As to expression, expressed in anthers and pollen.

The protein resides in the secreted. It is found in the cell wall. It localises to the membrane. Functionally, may aid fertilization by loosening the cell wall of the stigma and style, thereby facilitating penetration of the pollen tube. Acts selectively on grass cell walls, which are relatively poor in pectins and xyloglucans and rich in glucuronoarabinoxylans and (1-3),(1-4)-beta-D-glucans, when compared with cell walls of other angiosperms, including other monocots. The protein is Expansin-B9 (EXPB9) of Zea mays (Maize).